Reading from the N-terminus, the 364-residue chain is S-adenosylmethionine:tRNA ribosyltransferase-isomerase (364 aa).

This sequence belongs to the QueA family. As to quaternary structure, monomer.

The protein resides in the cytoplasm. The catalysed reaction is 7-aminomethyl-7-carbaguanosine(34) in tRNA + S-adenosyl-L-methionine = epoxyqueuosine(34) in tRNA + adenine + L-methionine + 2 H(+). It participates in tRNA modification; tRNA-queuosine biosynthesis. Its function is as follows. Transfers and isomerizes the ribose moiety from AdoMet to the 7-aminomethyl group of 7-deazaguanine (preQ1-tRNA) to give epoxyqueuosine (oQ-tRNA). The protein is S-adenosylmethionine:tRNA ribosyltransferase-isomerase of Lachnoclostridium phytofermentans (strain ATCC 700394 / DSM 18823 / ISDg) (Clostridium phytofermentans).